Consider the following 584-residue polypeptide: N(6)-adenosine-methyltransferase subunit METTL3 (584 aa).

Disordered stretches follow at residues 1–65 (MSDT…EHPP) and 162–221 (KADD…SNKV). A compositionally biased stretch (polar residues) spans 187-204 (RKSSVSLATASISQLTAS). The Nuclear localization signal motif lies at 213 to 220 (DKKGRSNK). Residues 381–382 (DI) and Asp-399 each bind S-adenosyl-L-methionine. Positions 400–414 (PPWDIHMELPYGTLT) are gate loop 1. Interaction with METTL14 regions lie at residues 454–458 (DRVDE) and 468–484 (QRII…NHGK). Residues 466–483 (QLQRIIRTGRTGHWLNHG) form an interphase loop region. Positions 469-482 (RIIRTGRTGHWLNH) are positively charged region required for RNA-binding. Residues 511 to 519 (VRSTSHKPD) form a gate loop 2 region. Residues Lys-517, 540–543 (RPHN), and 553–554 (NQ) contribute to the S-adenosyl-L-methionine site.

Belongs to the MT-A70-like family. As to quaternary structure, heterodimer; heterodimerizes with mettl14 to form an antiparallel heterodimer that constitutes an active methyltransferase. Component of the WMM complex, a N6-methyltransferase complex composed of a catalytic subcomplex, named MAC, and of an associated subcomplex, named MACOM. The MAC subcomplex is composed of mettl3 and mettl14. As to expression, expressed in the hemato-vascular system: enriched in sorted endothelial cells and haemogenic endothelium.

The protein localises to the nucleus. It localises to the nucleus speckle. It is found in the cytoplasm. It carries out the reaction an adenosine in mRNA + S-adenosyl-L-methionine = an N(6)-methyladenosine in mRNA + S-adenosyl-L-homocysteine + H(+). In terms of biological role, the METTL3-METTL14 heterodimer forms a N6-methyltransferase complex that methylates adenosine residues at the N(6) position of some RNAs and regulates various processes such as the circadian clock, differentiation of embryonic and hematopoietic stem cells, cortical neurogenesis, response to DNA damage, differentiation of T-cells and primary miRNA processing. In the heterodimer formed with mettl14, mettl3 constitutes the catalytic core. N6-methyladenosine (m6A), which takes place at the 5'-[AG]GAC-3' consensus sites of some mRNAs, plays a role in mRNA stability, processing and translation efficiency. M6A is also involved in hematopoietic stem cells specification: m6A methylation and subsequent destabilization of mRNAs, such as notch1a, leads to decreased Notch signaling, promoting endothelial to hematopoietic transition. M6A also takes place in other RNA molecules, such as primary miRNA (pri-miRNAs). Mediates methylation of pri-miRNAs. The polypeptide is N(6)-adenosine-methyltransferase subunit METTL3 (Danio rerio (Zebrafish)).